The primary structure comprises 166 residues: Xanthine-guanine phosphoribosyltransferase (166 aa).

5-phospho-alpha-D-ribose 1-diphosphate is bound by residues 42–43 and 99–107; these read RG and DDLTDTGKT. Asp100 is a binding site for Mg(2+). 2 residues coordinate guanine: Asp103 and Ile146. Xanthine contacts are provided by Asp103 and Ile146. GMP contacts are provided by residues 103 to 107 and 145 to 146; these read DTGKT and WI.

This sequence belongs to the purine/pyrimidine phosphoribosyltransferase family. XGPT subfamily. Homotetramer. It depends on Mg(2+) as a cofactor.

The protein resides in the cell inner membrane. The enzyme catalyses GMP + diphosphate = guanine + 5-phospho-alpha-D-ribose 1-diphosphate. The catalysed reaction is XMP + diphosphate = xanthine + 5-phospho-alpha-D-ribose 1-diphosphate. It carries out the reaction IMP + diphosphate = hypoxanthine + 5-phospho-alpha-D-ribose 1-diphosphate. The protein operates within purine metabolism; GMP biosynthesis via salvage pathway; GMP from guanine: step 1/1. Its pathway is purine metabolism; XMP biosynthesis via salvage pathway; XMP from xanthine: step 1/1. Purine salvage pathway enzyme that catalyzes the transfer of the ribosyl-5-phosphate group from 5-phospho-alpha-D-ribose 1-diphosphate (PRPP) to the N9 position of the 6-oxopurines guanine and xanthine to form the corresponding ribonucleotides GMP (guanosine 5'-monophosphate) and XMP (xanthosine 5'-monophosphate), with the release of PPi. To a lesser extent, also acts on hypoxanthine. The chain is Xanthine-guanine phosphoribosyltransferase from Mesorhizobium japonicum (strain LMG 29417 / CECT 9101 / MAFF 303099) (Mesorhizobium loti (strain MAFF 303099)).